The following is a 57-amino-acid chain: uncharacterized protein (57 aa).

The interval 26–57 is disordered; that stretch reads VVSTRKRLKQNTNTPPHYDTSEDEDEDNYYNY. A compositionally biased stretch (acidic residues) spans 46–57; the sequence is SEDEDEDNYYNY.

This is an uncharacterized protein from Autographa californica nuclear polyhedrosis virus (AcMNPV).